We begin with the raw amino-acid sequence, 197 residues long: Holliday junction branch migration complex subunit RuvA (197 aa).

Residues 1 to 64 (MIASVRGVVQ…EDMLALFGFS (64 aa)) form a domain I region. A domain II region spans residues 65-143 (SPAQRALFEL…VATISPQLST (79 aa)). A flexible linker region spans residues 144-153 (NPGLLALNTE). The interval 153–197 (ELIDILTSLGYSTTEAQAALNALPADAPADTEERLRLALQYFGGV) is domain III.

Belongs to the RuvA family. Homotetramer. Forms an RuvA(8)-RuvB(12)-Holliday junction (HJ) complex. HJ DNA is sandwiched between 2 RuvA tetramers; dsDNA enters through RuvA and exits via RuvB. An RuvB hexamer assembles on each DNA strand where it exits the tetramer. Each RuvB hexamer is contacted by two RuvA subunits (via domain III) on 2 adjacent RuvB subunits; this complex drives branch migration. In the full resolvosome a probable DNA-RuvA(4)-RuvB(12)-RuvC(2) complex forms which resolves the HJ.

The protein localises to the cytoplasm. Functionally, the RuvA-RuvB-RuvC complex processes Holliday junction (HJ) DNA during genetic recombination and DNA repair, while the RuvA-RuvB complex plays an important role in the rescue of blocked DNA replication forks via replication fork reversal (RFR). RuvA specifically binds to HJ cruciform DNA, conferring on it an open structure. The RuvB hexamer acts as an ATP-dependent pump, pulling dsDNA into and through the RuvAB complex. HJ branch migration allows RuvC to scan DNA until it finds its consensus sequence, where it cleaves and resolves the cruciform DNA. This chain is Holliday junction branch migration complex subunit RuvA, found in Herpetosiphon aurantiacus (strain ATCC 23779 / DSM 785 / 114-95).